A 307-amino-acid polypeptide reads, in one-letter code: D-alanine--D-alanine ligase (307 aa).

The 194-residue stretch at 108 to 301 (KEVFAAAGLP…FPEFCAWLVE (194 aa)) folds into the ATP-grasp domain. Residue 135–185 (LPPPYVVKPNAEGSSVGVYIVHEDANGPPQLAADMPQDLMVETYVPGRELT) coordinates ATP. Residues Asp252, Glu268, and Asn270 each coordinate Mg(2+).

Belongs to the D-alanine--D-alanine ligase family. Mg(2+) is required as a cofactor. Requires Mn(2+) as cofactor.

It is found in the cytoplasm. The enzyme catalyses 2 D-alanine + ATP = D-alanyl-D-alanine + ADP + phosphate + H(+). It functions in the pathway cell wall biogenesis; peptidoglycan biosynthesis. In terms of biological role, cell wall formation. This Cereibacter sphaeroides (strain ATCC 17029 / ATH 2.4.9) (Rhodobacter sphaeroides) protein is D-alanine--D-alanine ligase.